A 311-amino-acid polypeptide reads, in one-letter code: Methionyl-tRNA formyltransferase (311 aa).

(6S)-5,6,7,8-tetrahydrofolate is bound at residue 112–115 (SLLP).

Belongs to the Fmt family.

It catalyses the reaction L-methionyl-tRNA(fMet) + (6R)-10-formyltetrahydrofolate = N-formyl-L-methionyl-tRNA(fMet) + (6S)-5,6,7,8-tetrahydrofolate + H(+). Its function is as follows. Attaches a formyl group to the free amino group of methionyl-tRNA(fMet). The formyl group appears to play a dual role in the initiator identity of N-formylmethionyl-tRNA by promoting its recognition by IF2 and preventing the misappropriation of this tRNA by the elongation apparatus. The polypeptide is Methionyl-tRNA formyltransferase (Rhizobium meliloti (strain 1021) (Ensifer meliloti)).